The sequence spans 160 residues: Endoribonuclease YbeY (160 aa).

Zn(2+)-binding residues include histidine 112, histidine 116, and histidine 122. The segment at 141-160 (ELGHPDPYACDDEEPPSKEK) is disordered.

Belongs to the endoribonuclease YbeY family. Zn(2+) serves as cofactor.

It localises to the cytoplasm. Functionally, single strand-specific metallo-endoribonuclease involved in late-stage 70S ribosome quality control and in maturation of the 3' terminus of the 16S rRNA. This chain is Endoribonuclease YbeY, found in Pseudomonas paraeruginosa (strain DSM 24068 / PA7) (Pseudomonas aeruginosa (strain PA7)).